We begin with the raw amino-acid sequence, 200 residues long: Probable molybdenum cofactor guanylyltransferase (200 aa).

Residues 9–11 (LAG), Lys-21, Asp-69, and Asp-100 each bind GTP. Asp-100 contacts Mg(2+).

It belongs to the MobA family. Requires Mg(2+) as cofactor.

The protein resides in the cytoplasm. It carries out the reaction Mo-molybdopterin + GTP + H(+) = Mo-molybdopterin guanine dinucleotide + diphosphate. Transfers a GMP moiety from GTP to Mo-molybdopterin (Mo-MPT) cofactor (Moco or molybdenum cofactor) to form Mo-molybdopterin guanine dinucleotide (Mo-MGD) cofactor. This Bacillus anthracis (strain CDC 684 / NRRL 3495) protein is Probable molybdenum cofactor guanylyltransferase.